The following is a 229-amino-acid chain: PKHD-type hydroxylase BRADO4652 (229 aa).

A Fe2OG dioxygenase domain is found at 78–180 (QIFPPLFNRY…RVASFFWMQS (103 aa)). The Fe cation site is built by H98, D100, and H161. R171 is a 2-oxoglutarate binding site.

It depends on Fe(2+) as a cofactor. Requires L-ascorbate as cofactor.

The polypeptide is PKHD-type hydroxylase BRADO4652 (Bradyrhizobium sp. (strain ORS 278)).